Reading from the N-terminus, the 252-residue chain is Cell division protein ZapD (252 aa).

It belongs to the ZapD family. Interacts with FtsZ.

The protein localises to the cytoplasm. Cell division factor that enhances FtsZ-ring assembly. Directly interacts with FtsZ and promotes bundling of FtsZ protofilaments, with a reduction in FtsZ GTPase activity. The polypeptide is Cell division protein ZapD (Cupriavidus taiwanensis (strain DSM 17343 / BCRC 17206 / CCUG 44338 / CIP 107171 / LMG 19424 / R1) (Ralstonia taiwanensis (strain LMG 19424))).